Here is a 238-residue protein sequence, read N- to C-terminus: MSSYQQKQPFVPPPQPEQHQVKQPCQPPPQGKFVPIATSEPCHTDVPQPGNTKIPEPCSTKVPEPGNTVVLEPDYTTMPGPCSTNITEPDYTTIPGPCSTNITEPDYTTIPGPCSTNIPGPDRTVVPGSCSTNITEPDYTTIPGPSSTKIPDPGCAMVPGPSPSSTSEPSSEPCSINVREPGYMNASEPTHAKVPDQGYTKIPDQGSSKVPEPCQSRVPEVCPPTVTPVSAKQKTKQK.

A disordered region spans residues 1–67; it reads MSSYQQKQPF…CSTKVPEPGN (67 aa). Serine 2 is subject to N-acetylserine. 21 repeat units span residues 52–59, 60–67, 68–75, 76–83, 84–91, 92–99, 100–107, 108–115, 116–123, 124–131, 132–139, 140–147, 148–155, 156–163, 164–175, 176–183, 184–191, 192–199, 200–207, 208–215, and 216–223. The interval 52-223 is 21 X 8 AA approximate tandem repeats; the sequence is TKIPEPCSTK…CQSRVPEVCP (172 aa). The tract at residues 110 to 238 is disordered; the sequence is IPGPCSTNIP…VSAKQKTKQK (129 aa). The span at 163–175 shows a compositional bias: low complexity; it reads PSSTSEPSSEPCS.

It belongs to the cornifin (SPRR) family.

It is found in the cytoplasm. In terms of biological role, cross-linked envelope protein of keratinocytes. The protein is Small proline-rich protein 3 (Sprr3) of Mus musculus (Mouse).